The primary structure comprises 339 residues: MTTRIAIDCMGGDHGPSVTVPAAIQFLAEHPSANLVLVGQEGVLRPLLGNHANDSRIRLLHASEIVGMDESPALALRNKKDSSMRVAINQVKAGDADACVSAGNTGALMAISRFVLKMLPGIDRPAICAPLPTVNGHTHMLDLGANVDCGPHHLLQFGIMGAMLVAAMEHKDQPTVGILNIGEEEIKGNEVVKAAAELLRASDLNFIGNVEGDGIYKGEADVIVCDGFVGNVALKTSEGLAQMLASSLRSEFKRNWLTKLAALIAISVLNNFKKRFDHRRYNGAILLGLKGISVKSHGSADILAFGNAISRAYDAAENRVVERISSRIAAMIPAAVENV.

It belongs to the PlsX family. As to quaternary structure, homodimer. Probably interacts with PlsY.

It is found in the cytoplasm. The enzyme catalyses a fatty acyl-[ACP] + phosphate = an acyl phosphate + holo-[ACP]. Its pathway is lipid metabolism; phospholipid metabolism. Functionally, catalyzes the reversible formation of acyl-phosphate (acyl-PO(4)) from acyl-[acyl-carrier-protein] (acyl-ACP). This enzyme utilizes acyl-ACP as fatty acyl donor, but not acyl-CoA. This is Phosphate acyltransferase from Dechloromonas aromatica (strain RCB).